The chain runs to 405 residues: Probable tRNA sulfurtransferase (405 aa).

Residues 60–165 (DKIDQRLKLV…QDAIYISNQL (106 aa)) enclose the THUMP domain. Residues 183–184 (ML), 208–209 (HF), arginine 265, glycine 287, and glutamine 296 contribute to the ATP site.

It belongs to the ThiI family.

It is found in the cytoplasm. The enzyme catalyses [ThiI sulfur-carrier protein]-S-sulfanyl-L-cysteine + a uridine in tRNA + 2 reduced [2Fe-2S]-[ferredoxin] + ATP + H(+) = [ThiI sulfur-carrier protein]-L-cysteine + a 4-thiouridine in tRNA + 2 oxidized [2Fe-2S]-[ferredoxin] + AMP + diphosphate. It catalyses the reaction [ThiS sulfur-carrier protein]-C-terminal Gly-Gly-AMP + S-sulfanyl-L-cysteinyl-[cysteine desulfurase] + AH2 = [ThiS sulfur-carrier protein]-C-terminal-Gly-aminoethanethioate + L-cysteinyl-[cysteine desulfurase] + A + AMP + 2 H(+). It functions in the pathway cofactor biosynthesis; thiamine diphosphate biosynthesis. Functionally, catalyzes the ATP-dependent transfer of a sulfur to tRNA to produce 4-thiouridine in position 8 of tRNAs, which functions as a near-UV photosensor. Also catalyzes the transfer of sulfur to the sulfur carrier protein ThiS, forming ThiS-thiocarboxylate. This is a step in the synthesis of thiazole, in the thiamine biosynthesis pathway. The sulfur is donated as persulfide by IscS. The sequence is that of Probable tRNA sulfurtransferase from Lactobacillus gasseri (strain ATCC 33323 / DSM 20243 / BCRC 14619 / CIP 102991 / JCM 1131 / KCTC 3163 / NCIMB 11718 / NCTC 13722 / AM63).